The chain runs to 560 residues: NAD-dependent malic enzyme (560 aa).

Catalysis depends on Tyr-100, which acts as the Proton donor. Arg-153 is a binding site for NAD(+). The active-site Proton acceptor is Lys-171. A divalent metal cation-binding residues include Glu-242, Asp-243, and Asp-266. NAD(+) contacts are provided by Asp-266 and Asn-413.

It belongs to the malic enzymes family. Homotetramer. The cofactor is Mg(2+). Requires Mn(2+) as cofactor.

It carries out the reaction (S)-malate + NAD(+) = pyruvate + CO2 + NADH. The catalysed reaction is oxaloacetate + H(+) = pyruvate + CO2. This chain is NAD-dependent malic enzyme, found in Psychrobacter arcticus (strain DSM 17307 / VKM B-2377 / 273-4).